The chain runs to 211 residues: Homeobox protein Rhox5 (211 aa).

The segment at 38-129 (FFQAGEGRDE…PLRRPGSTQR (92 aa)) is disordered. Gly residues-rich tracts occupy residues 52–62 (GQPGEGAVGTE) and 70–84 (GGEG…GPVG). Residues 102–119 (HEPVAEGTESVKSEDKQM) are compositionally biased toward basic and acidic residues. The segment at residues 119–176 (MPLRRPGSTQRRLAELERILLSSGSSSGGRSLIDGWISVCPECRNWFKIRRAAYRRNR) is a DNA-binding region (homeobox; atypical).

Highly expressed in placenta. Lower levels in testis, epididymis, ovary and skeletal muscle.

The protein localises to the nucleus. Transcription factor required for differentiation of embryonic stem cells (ESCs) into primordial germ cells. This chain is Homeobox protein Rhox5 (Rhox5), found in Rattus norvegicus (Rat).